The chain runs to 516 residues: Importin subunit alpha-B (516 aa).

Residues 1-29 show a composition bias toward basic and acidic residues; it reads MQRSKQETRKSQYKKSIDSDESRRKREEA. A disordered region spans residues 1 to 54; the sequence is MQRSKQETRKSQYKKSIDSDESRRKREEASLSIRKNKREESLLKKRTQAVPGST. Residues 1-55 enclose the IBB domain; sequence MQRSKQETRKSQYKKSIDSDESRRKREEASLSIRKNKREESLLKKRTQAVPGSTP. ARM repeat units lie at residues 55-96, 100-140, 143-182, 185-227, 229-268, 271-310, 313-352, 355-394, and 398-437; these read PVKV…KLLS, SPPI…NIAS, PEQTRVVIENGAIQVFVLLLSSPHDDVREQAVWALGNIAG, HYCR…NFCR, KPQPPFEIVRASLPVLAKLIYYQDEEVLIDACWALSYLSD, NERIQEVIDAKVCRKMVELLGHPTIAVQTPALRTIGNIVT, DNQTQIVLSVQALSHLLNLLQSPKRAIRKEACWTISNITA, KNQIQQVIDANIIPSLVYLLANAEFEIQKEAAWAISNATS, and PQQIHFLVSQGCVKPLCDLLKVSDPRIINVALEGIENILV. Residues 490–516 are disordered; the sequence is EQEDEGDLMPEGSSFSFSNQTNSNFNL. Residues 502–516 show a composition bias toward low complexity; sequence SSFSFSNQTNSNFNL.

Belongs to the importin alpha family. As to quaternary structure, forms a complex with tnpo/importin subunit beta.

It localises to the cytoplasm. The protein resides in the nucleus envelope. Its function is as follows. Functions in nuclear protein import via a substrate-importin alpha-beta transport complex that passes though the nuclear pore complexes (NPC). Binds specifically and directly to substrates containing either a simple or bipartite NLS motif. The polypeptide is Importin subunit alpha-B (Dictyostelium discoideum (Social amoeba)).